The following is a 233-amino-acid chain: 5'-methylthioadenosine/S-adenosylhomocysteine nucleosidase (233 aa).

The Proton acceptor role is filled by E12. Substrate contacts are provided by residues G78, I152, and 173-174 (ME). The Proton donor role is filled by D197.

It belongs to the PNP/UDP phosphorylase family. MtnN subfamily. As to quaternary structure, homodimer.

The enzyme catalyses S-adenosyl-L-homocysteine + H2O = S-(5-deoxy-D-ribos-5-yl)-L-homocysteine + adenine. The catalysed reaction is S-methyl-5'-thioadenosine + H2O = 5-(methylsulfanyl)-D-ribose + adenine. It catalyses the reaction 5'-deoxyadenosine + H2O = 5-deoxy-D-ribose + adenine. It functions in the pathway amino-acid biosynthesis; L-methionine biosynthesis via salvage pathway; S-methyl-5-thio-alpha-D-ribose 1-phosphate from S-methyl-5'-thioadenosine (hydrolase route): step 1/2. Functionally, catalyzes the irreversible cleavage of the glycosidic bond in both 5'-methylthioadenosine (MTA) and S-adenosylhomocysteine (SAH/AdoHcy) to adenine and the corresponding thioribose, 5'-methylthioribose and S-ribosylhomocysteine, respectively. Also cleaves 5'-deoxyadenosine, a toxic by-product of radical S-adenosylmethionine (SAM) enzymes, into 5-deoxyribose and adenine. Thus, is required for in vivo function of the radical SAM enzymes biotin synthase and lipoic acid synthase, that are inhibited by 5'-deoxyadenosine accumulation. The chain is 5'-methylthioadenosine/S-adenosylhomocysteine nucleosidase from Yersinia pestis bv. Antiqua (strain Antiqua).